The following is a 323-amino-acid chain: Thiamine-monophosphate kinase (323 aa).

Mg(2+)-binding residues include aspartate 30, serine 45, threonine 46, and aspartate 47. Residue histidine 54 participates in substrate binding. Mg(2+)-binding residues include aspartate 75 and aspartate 122. ATP is bound by residues 121-122 (GD) and arginine 146. Aspartate 212 is a Mg(2+) binding site. Residue serine 214 coordinates ATP. Mg(2+) is bound at residue aspartate 215. Glutamate 263 and phenylalanine 319 together coordinate substrate.

It belongs to the thiamine-monophosphate kinase family.

It carries out the reaction thiamine phosphate + ATP = thiamine diphosphate + ADP. Its pathway is cofactor biosynthesis; thiamine diphosphate biosynthesis; thiamine diphosphate from thiamine phosphate: step 1/1. Functionally, catalyzes the ATP-dependent phosphorylation of thiamine-monophosphate (TMP) to form thiamine-pyrophosphate (TPP), the active form of vitamin B1. The chain is Thiamine-monophosphate kinase from Buchnera aphidicola subsp. Schizaphis graminum (strain Sg).